The following is a 195-amino-acid chain: Glycerol-3-phosphate acyltransferase (195 aa).

5 consecutive transmembrane segments (helical) span residues 3-23, 53-73, 80-100, 115-135, and 147-167; these read IHAV…GLIL, AVMT…LAKI, FAFI…WLLF, LIEY…FAIF, and IFVA…VFIA.

Belongs to the PlsY family. Probably interacts with PlsX.

Its subcellular location is the cell inner membrane. It catalyses the reaction an acyl phosphate + sn-glycerol 3-phosphate = a 1-acyl-sn-glycero-3-phosphate + phosphate. It participates in lipid metabolism; phospholipid metabolism. Functionally, catalyzes the transfer of an acyl group from acyl-phosphate (acyl-PO(4)) to glycerol-3-phosphate (G3P) to form lysophosphatidic acid (LPA). This enzyme utilizes acyl-phosphate as fatty acyl donor, but not acyl-CoA or acyl-ACP. The chain is Glycerol-3-phosphate acyltransferase from Ehrlichia chaffeensis (strain ATCC CRL-10679 / Arkansas).